The chain runs to 389 residues: Mesotocin receptor (389 aa).

Over 1-50 (MEGLCLNLDCSELPNSSWVNSSMENQNHSSNSTRDPLKRNEEVAKVEVTV) the chain is Extracellular. Residues Asn15, Asn20, Asn27, and Asn31 are each glycosylated (N-linked (GlcNAc...) asparagine). The chain crosses the membrane as a helical span at residues 51-71 (LALILFLALAGNICVLLGIYI). Residues 72 to 87 (NRHKHSRMYFFMKHLS) lie on the Cytoplasmic side of the membrane. Residues 88–108 (IADLVVAIFQVLPQLIWDITF) traverse the membrane as a helical segment. Over 109 to 119 (RFYAPDLVCRL) the chain is Extracellular. Cys117 and Cys192 are oxidised to a cystine. The helical transmembrane segment at 120 to 140 (VTYLQVVGMFASTYMLLLMSL) threads the bilayer. Residues 141-159 (DRCLAICQPLRSLHRRSDC) are Cytoplasmic-facing. Residues 160–180 (VYVLFTWILSFLLSTPQTVIF) form a helical membrane-spanning segment. At 181-207 (SLTEVGNGVYDCRADFIQPWGPKAYIT) the chain is on the extracellular side. A helical transmembrane segment spans residues 208–228 (WITLAVYIIPVMILSVCYGLI). Residues 229–275 (SYKIWQNIRLKTVCESNLRLSTSRRATLSRVSSVRLISKAKIRTVKM) lie on the Cytoplasmic side of the membrane. The helical transmembrane segment at 276–296 (TFIIVLAYIVCWTPFFFVQMW) threads the bilayer. The Extracellular portion of the chain corresponds to 297–308 (SVWDPNPPKEAS). The chain crosses the membrane as a helical span at residues 309-329 (LFIIAMLLGSLNSCCNPWIYM). The Cytoplasmic portion of the chain corresponds to 330–389 (LFTGHLFHDLLQSFLCCSARYLKTQQQGSDLSASRKSNSSTFVLSRKSSSQKSITQPSTA). Positions 360–389 (LSASRKSNSSTFVLSRKSSSQKSITQPSTA) are disordered.

It belongs to the G-protein coupled receptor 1 family. Vasopressin/oxytocin receptor subfamily. As to expression, highly expressed in the bladder. Also expressed in kidney, brain and skeletal muscle.

It is found in the cell membrane. Functionally, binds to mesotocin and may play a role in the regulation of water and salt transport. The protein is Mesotocin receptor of Rhinella marina (Cane toad).